A 183-amino-acid chain; its full sequence is Seminal plasma protein BSP-30 kDa (183 aa).

Positions 1–25 are cleaved as a signal peptide; sequence MAPLVGLFLIWAGASVFQQLHPVNG. Residues 23-47 are disordered; sequence VNGGDIPDPGSKPTPPGMADELPTE. Thr-36, Thr-46, Thr-57, Thr-58, Thr-59, and Thr-64 each carry an O-linked (GalNAc...) threonine glycan. Fibronectin type-II domains follow at residues 92–136 and 137–183; these read FEGP…FCTE and RDEP…WKYC. Cystine bridges form between Cys-97-Cys-121, Cys-111-Cys-134, Cys-142-Cys-168, and Cys-156-Cys-183.

The protein belongs to the seminal plasma protein family.

The protein localises to the secreted. In terms of biological role, binds to spermatozoa upon ejaculation and may play a role in sperm capacitation. Displays heparin-, gelatin- and phospholipid-binding activities. The protein is Seminal plasma protein BSP-30 kDa of Bos taurus (Bovine).